The chain runs to 79 residues: Sec-independent protein translocase protein TatA (79 aa).

A helical transmembrane segment spans residues 1–21 (MFSGISIWQLLILLAIVVLLF). Composition is skewed to basic and acidic residues over residues 44 to 58 (MKDGEDEQDHKRLAD) and 66 to 79 (QDAEQKAEQEKDKA). The tract at residues 44–79 (MKDGEDEQDHKRLADDDQPQNKQDAEQKAEQEKDKA) is disordered.

This sequence belongs to the TatA/E family. The Tat system comprises two distinct complexes: a TatABC complex, containing multiple copies of TatA, TatB and TatC subunits, and a separate TatA complex, containing only TatA subunits. Substrates initially bind to the TatABC complex, which probably triggers association of the separate TatA complex to form the active translocon.

It is found in the cell inner membrane. Its function is as follows. Part of the twin-arginine translocation (Tat) system that transports large folded proteins containing a characteristic twin-arginine motif in their signal peptide across membranes. TatA could form the protein-conducting channel of the Tat system. This is Sec-independent protein translocase protein TatA from Alcanivorax borkumensis (strain ATCC 700651 / DSM 11573 / NCIMB 13689 / SK2).